Reading from the N-terminus, the 422-residue chain is Leucine-rich repeat protein 1 (422 aa).

LRR repeat units follow at residues 184–207, 209–230, 233–258, 260–279, 280–301, and 304–327; these read LKNL…IGDL, HLQE…LCTS, QKSL…QFRE, TNLN…IGQL, TNLR…EFKM, and LEYL…KLQV.

Component of the probable ECS(LRR1) E3 ubiquitin-protein ligase complex which contains CUL2, RBX1, Elongin BC complex and LRR1. Interacts with CUL2, RBX1, ELOB and ELOC.

Its subcellular location is the nucleus. The protein operates within protein modification; protein ubiquitination. Functionally, substrate recognition subunit of an ECS (Elongin BC-CUL2/5-SOCS-box protein) E3 ubiquitin-protein ligase complex which mediates the ubiquitination and subsequent proteasomal degradation of target proteins. ECS(LRR1) ubiquitinates MCM7 and promotes CMG replisome disassembly by VCP and chromatin extraction during S-phase. May negatively regulate the 4-1BB-mediated signaling cascades which result in the activation of NK-kappaB and JNK1. In Mus musculus (Mouse), this protein is Leucine-rich repeat protein 1.